Reading from the N-terminus, the 534-residue chain is Arginine--tRNA ligase (534 aa).

The 'HIGH' region signature appears at 120–130 (ANPTGFLHLGH).

It belongs to the class-I aminoacyl-tRNA synthetase family. As to quaternary structure, monomer.

The protein localises to the cytoplasm. It carries out the reaction tRNA(Arg) + L-arginine + ATP = L-arginyl-tRNA(Arg) + AMP + diphosphate. The chain is Arginine--tRNA ligase from Mesomycoplasma hyopneumoniae (strain 232) (Mycoplasma hyopneumoniae).